Reading from the N-terminus, the 104-residue chain is L-rhamnose mutarotase (104 aa).

Residue Tyr18 coordinates substrate. Catalysis depends on His22, which acts as the Proton donor. Substrate is bound by residues Tyr41 and 76–77 (WW).

Belongs to the rhamnose mutarotase family. Homodimer.

It localises to the cytoplasm. The enzyme catalyses alpha-L-rhamnose = beta-L-rhamnose. Its pathway is carbohydrate metabolism; L-rhamnose metabolism. Its function is as follows. Involved in the anomeric conversion of L-rhamnose. The chain is L-rhamnose mutarotase from Citrobacter koseri (strain ATCC BAA-895 / CDC 4225-83 / SGSC4696).